Here is a 374-residue protein sequence, read N- to C-terminus: MSLEAFHHSEPLTLGVELELQLVNTHNYDLAPYAEDMLRLMARQPLPGSVVPEMTNSMIEVSTGICHSGSEVLGQLTQIRDALVRSADKLNIAVVGGGTHPFQQWHERRIYDKPRFQELSQLYGYLSKQFTIFGQHVHIGCPDADAALLMLHRMSRYIPHFIALSASSPYVQGQDTAFDSARLNSVFAFPLSGRAPMVLTWKDFEAYFDKMTRTGVVKSMKDFYWDIRPKPEFGTIEIRVFDTPLTIERAAALSAFVQSLGAWFLAEQPFTPSEDDYLVYTYNRFQACRFGMQAVYVDPATGEHMPLRDHILQTIDHIARHATVTGASGALHLLRSEAAAGQNDARWLRDRQRDEQLLGEVSRQAALRFRGAPA.

Belongs to the glutamate--cysteine ligase type 2 family. YbdK subfamily.

The catalysed reaction is L-cysteine + L-glutamate + ATP = gamma-L-glutamyl-L-cysteine + ADP + phosphate + H(+). In terms of biological role, ATP-dependent carboxylate-amine ligase which exhibits weak glutamate--cysteine ligase activity. The protein is Putative glutamate--cysteine ligase 2 of Paracidovorax citrulli (strain AAC00-1) (Acidovorax citrulli).